Consider the following 298-residue polypeptide: Beta-1,3-galactosyltransferase 5 (298 aa).

Residues 1–7 lie on the Cytoplasmic side of the membrane; that stretch reads MAFPKMR. Residues 8–28 traverse the membrane as a helical; Signal-anchor for type II membrane protein segment; that stretch reads LMYICLLVLGALCLYFSMYSL. The Lumenal segment spans residues 29–298; it reads NPFKEQSFVY…PRTLLDYWQA (270 aa). N-linked (GlcNAc...) asparagine glycans are attached at residues asparagine 130, asparagine 174, and asparagine 231.

This sequence belongs to the glycosyltransferase 31 family.

Its subcellular location is the golgi apparatus membrane. The catalysed reaction is a globoside Gb4Cer (d18:1(4E)) + UDP-alpha-D-galactose = a globoside GalGb4Cer (d18:1(4E)) + UDP + H(+). The protein operates within protein modification; protein glycosylation. In terms of biological role, catalyzes the transfer of Gal to GlcNAc-based acceptors with a preference for the core3 O-linked glycan GlcNAc(beta1,3)GalNAc structure. Can use glycolipid LC3Cer as an efficient acceptor. This chain is Beta-1,3-galactosyltransferase 5 (B3GALT5), found in Gorilla gorilla gorilla (Western lowland gorilla).